A 423-amino-acid polypeptide reads, in one-letter code: Gamma-glutamyl phosphate reductase (423 aa).

Belongs to the gamma-glutamyl phosphate reductase family.

Its subcellular location is the cytoplasm. It carries out the reaction L-glutamate 5-semialdehyde + phosphate + NADP(+) = L-glutamyl 5-phosphate + NADPH + H(+). It functions in the pathway amino-acid biosynthesis; L-proline biosynthesis; L-glutamate 5-semialdehyde from L-glutamate: step 2/2. Functionally, catalyzes the NADPH-dependent reduction of L-glutamate 5-phosphate into L-glutamate 5-semialdehyde and phosphate. The product spontaneously undergoes cyclization to form 1-pyrroline-5-carboxylate. This Burkholderia thailandensis (strain ATCC 700388 / DSM 13276 / CCUG 48851 / CIP 106301 / E264) protein is Gamma-glutamyl phosphate reductase.